The primary structure comprises 1013 residues: NHS-like protein 3 (1013 aa).

Phosphoserine is present on Lys-17. The disordered stretch occupies residues 20 to 195; sequence SAKAESDNRQ…PPGSRDAVRI (176 aa). The span at 73–89 shows a compositional bias: basic and acidic residues; it reads QHQERQKLSKGGWDHGD. Composition is skewed to polar residues over residues 90–99 and 106–120; these read TQSIQSSQTG and SIYS…SSTA. Position 92 is a phosphoserine (Ser-92). Position 108 is a phosphotyrosine (Tyr-108). Ser-136, Ser-143, and Ser-159 each carry phosphoserine. At Thr-160 the chain carries Phosphothreonine. Positions 168 to 178 are enriched in basic and acidic residues; it reads VQKELGLRNNR. Ser-213 is modified (phosphoserine). Arg-318 carries the post-translational modification Asymmetric dimethylarginine. A phosphoserine mark is found at Ser-320, Ser-325, Ser-328, Ser-336, Ser-337, Ser-339, and Ser-340. The interval 330–1013 is disordered; it reads RSLGRFSSAS…PGSDPQKKLV (684 aa). Low complexity predominate over residues 336 to 361; sequence SSASSPRPRSRNASSSSDNWSHSQSS. The span at 362–375 shows a compositional bias: polar residues; sequence ETIVSDGSTLSSKG. Residues Ser-398, Ser-402, and Ser-407 each carry the phosphoserine modification. Residues 408-427 show a composition bias toward polar residues; it reads TAETSDTASIRSSGQLSGRS. Composition is skewed to low complexity over residues 484–493 and 515–530; these read VGAVSCPPSS and RTLS…SGTP. A Phosphothreonine modification is found at Thr-529. Phosphoserine is present on Ser-543. Residues 564–577 show a composition bias toward low complexity; sequence SVSSSLTSLCSSSS. The residue at position 591 (Thr-591) is a Phosphothreonine. The span at 600–614 shows a compositional bias: pro residues; that stretch reads PPHPKVPAPFSPPPS. Ser-610 carries the post-translational modification Phosphoserine. Residues 615–633 are compositionally biased toward low complexity; the sequence is KSKSSNQAAPVLAAPAVAP. The segment covering 635-657 has biased composition (polar residues); the sequence is QVSTIDTSPASPSMPQTTLTPAQ. Phosphoserine is present on residues Ser-667 and Ser-671. Pro residues-rich tracts occupy residues 668–683 and 706–716; these read PPPS…PPPT and PSWPPPPPPAP. Residues 779–795 show a composition bias toward basic and acidic residues; the sequence is PQKDSVGKHSGAPREDS. Polar residues predominate over residues 814-829; sequence GASTGIPNPSPGSSAP. Phosphoserine occurs at positions 838, 842, and 848. The span at 859 to 873 shows a compositional bias: low complexity; that stretch reads ASSLAASESPASALP. Phosphoserine occurs at positions 909, 952, and 959. Pro residues predominate over residues 942–961; that stretch reads KAPPPVARKPSVGVPPPSPS. Over residues 964–975 the composition is skewed to polar residues; that stretch reads RTESLTAPSTNG.

Able to directly activate the TNF-NFkappaB signaling pathway. The sequence is that of NHS-like protein 3 (Nhsl3) from Mus musculus (Mouse).